The following is a 221-amino-acid chain: Adenylate kinase (221 aa).

10 to 15 (GAGKGT) serves as a coordination point for ATP. The tract at residues 30 to 59 (STGDMLRAAVKARTELGVAAKKIMDAGGLV) is NMP. AMP-binding positions include Thr-31, Arg-36, 57–59 (GLV), 85–88 (GFPR), and Gln-92. An LID region spans residues 122–159 (GRRVHLASGRTYHIKFNPPKVEGKDDITGDPLIQRDDD). Residues Arg-123 and 132–133 (TY) contribute to the ATP site. AMP contacts are provided by Arg-156 and Arg-167. Ser-207 contributes to the ATP binding site.

Belongs to the adenylate kinase family. As to quaternary structure, monomer.

The protein resides in the cytoplasm. It carries out the reaction AMP + ATP = 2 ADP. The protein operates within purine metabolism; AMP biosynthesis via salvage pathway; AMP from ADP: step 1/1. In terms of biological role, catalyzes the reversible transfer of the terminal phosphate group between ATP and AMP. Plays an important role in cellular energy homeostasis and in adenine nucleotide metabolism. This Polynucleobacter necessarius subsp. necessarius (strain STIR1) protein is Adenylate kinase.